The following is a 357-amino-acid chain: Cinnamyl alcohol dehydrogenase 5 (357 aa).

Zn(2+) is bound at residue Cys47. Residue Thr49 coordinates NADP(+). 7 residues coordinate Zn(2+): His69, Glu70, Cys100, Cys103, Cys106, Cys114, and Cys163. Residues Thr167, 188–193 (GLGGVG), 211–216 (SSSNKK), Thr251, Gly275, and 298–300 (SFI) each bind NADP(+).

Belongs to the zinc-containing alcohol dehydrogenase family. As to quaternary structure, homodimer. Zn(2+) serves as cofactor. As to expression, expressed at the lateral root initiation sites, in the vascular tissues of the primary lateral root and the root caps. Expressed in the hypocotyl, cotyledon and leaf veins, apical meristem region, at the base of the trichomes, hydathodes and cauline leaves. In stems, expressed in the cells associated with the vascular cambium, interfascicular cambium and the developing xylem. Expressed in the vascular strand of petals and sepals, anthers, stamen filaments, stigma in flowers, and abscission, style and stigmatic regions of siliques.

It catalyses the reaction (E)-cinnamyl alcohol + NADP(+) = (E)-cinnamaldehyde + NADPH + H(+). The catalysed reaction is (E)-coniferol + NADP(+) = (E)-coniferaldehyde + NADPH + H(+). It carries out the reaction (E)-sinapyl alcohol + NADP(+) = (E)-sinapaldehyde + NADPH + H(+). The enzyme catalyses (E)-4-coumaroyl alcohol + NADP(+) = (E)-4-coumaraldehyde + NADPH + H(+). It catalyses the reaction (E)-caffeyl alcohol + NADP(+) = (E)-caffeyl aldehyde + NADPH + H(+). The protein operates within aromatic compound metabolism; phenylpropanoid biosynthesis. Functionally, involved in lignin biosynthesis in the floral stem. Catalyzes the final step specific for the production of lignin monomers. Catalyzes the NADPH-dependent reduction of coniferaldehyde, 5-hydroxyconiferaldehyde, sinapaldehyde, 4-coumaraldehyde and caffeyl aldehyde to their respective alcohols. In Arabidopsis thaliana (Mouse-ear cress), this protein is Cinnamyl alcohol dehydrogenase 5.